A 428-amino-acid chain; its full sequence is 5-methylthioadenosine/S-adenosylhomocysteine deaminase (428 aa).

The Zn(2+) site is built by histidine 65 and histidine 67. The substrate site is built by glutamate 94, arginine 158, and histidine 184. Histidine 211 is a binding site for Zn(2+). Positions 214 and 299 each coordinate substrate. Aspartate 299 provides a ligand contact to Zn(2+).

It belongs to the metallo-dependent hydrolases superfamily. MTA/SAH deaminase family. Zn(2+) serves as cofactor.

It catalyses the reaction S-adenosyl-L-homocysteine + H2O + H(+) = S-inosyl-L-homocysteine + NH4(+). The enzyme catalyses S-methyl-5'-thioadenosine + H2O + H(+) = S-methyl-5'-thioinosine + NH4(+). Catalyzes the deamination of 5-methylthioadenosine and S-adenosyl-L-homocysteine into 5-methylthioinosine and S-inosyl-L-homocysteine, respectively. Is also able to deaminate adenosine. The polypeptide is 5-methylthioadenosine/S-adenosylhomocysteine deaminase (Moorella thermoacetica (strain ATCC 39073 / JCM 9320)).